Reading from the N-terminus, the 437-residue chain is Exosome complex component RRP45 (437 aa).

A Phosphoserine modification is found at S65. N6-acetyllysine; alternate is present on K297. K297 is covalently cross-linked (Glycyl lysine isopeptide (Lys-Gly) (interchain with G-Cter in SUMO1); alternate). A Glycyl lysine isopeptide (Lys-Gly) (interchain with G-Cter in SUMO2); alternate cross-link involves residue K297. S306 and S346 each carry phosphoserine. Positions 339–437 (IGEGIENSWG…KRRKKKRTAN (99 aa)) are disordered. Positions 349 to 363 (DLEDSEKEEEEEGGI) are enriched in acidic residues. Residues S392, S394, and S407 each carry the phosphoserine modification. Residues 413-425 (AQTSANQKAPSKS) are compositionally biased toward polar residues. Residues 426–437 (QGKRRKKKRTAN) are compositionally biased toward basic residues.

It belongs to the RNase PH family. As to quaternary structure, component of the RNA exosome core complex (Exo-9), composed of EXOSC1, EXOSC2, EXOSC3, EXOSC4, EXOSC5, EXOSC6, EXOSC7, EXOSC8 and EXOSC9; within the complex interacts with EXOSC3, EXOSC4, EXOSC5 and DIS3. The catalytically inactive RNA exosome core complex (Exo-9) associates with the catalytic subunit EXOSC10/RRP6. Exo-9 may associate with DIS3 to form the nucleolar exosome complex, or DIS3L to form the cytoplasmic exosome complex. Exo-9 is formed by a hexameric base ring consisting of the heterodimers EXOSC4-EXOSC9, EXOSC5-EXOSC8 and EXOSC6-EXOSC7, and a cap ring consisting of EXOSC1, EXOSC2 and EXOSC3. The RNA exosome complex associates with cofactors C1D/RRP47, MPHOSPH6/MPP6 and MTREX/MTR4. Interacts (via C-terminus region) with SETX (via N-terminus domain); the interaction enhances SETX sumoylation. Interacts with DIS3; the interaction is direct.

The protein localises to the cytoplasm. The protein resides in the nucleus. Its subcellular location is the nucleolus. It localises to the nucleoplasm. Non-catalytic component of the RNA exosome complex which has 3'-&gt;5' exoribonuclease activity and participates in a multitude of cellular RNA processing and degradation events. In the nucleus, the RNA exosome complex is involved in proper maturation of stable RNA species such as rRNA, snRNA and snoRNA, in the elimination of RNA processing by-products and non-coding 'pervasive' transcripts, such as antisense RNA species and promoter-upstream transcripts (PROMPTs), and of mRNAs with processing defects, thereby limiting or excluding their export to the cytoplasm. The RNA exosome may be involved in Ig class switch recombination (CSR) and/or Ig variable region somatic hypermutation (SHM) by targeting AICDA deamination activity to transcribed dsDNA substrates. In the cytoplasm, the RNA exosome complex is involved in general mRNA turnover and specifically degrades inherently unstable mRNAs containing AU-rich elements (AREs) within their 3' untranslated regions, and in RNA surveillance pathways, preventing translation of aberrant mRNAs. It seems to be involved in degradation of histone mRNA. The catalytic inactive RNA exosome core complex of 9 subunits (Exo-9) is proposed to play a pivotal role in the binding and presentation of RNA for ribonucleolysis, and to serve as a scaffold for the association with catalytic subunits and accessory proteins or complexes. EXOSC9 binds to ARE-containing RNAs. The sequence is that of Exosome complex component RRP45 (Exosc9) from Rattus norvegicus (Rat).